Reading from the N-terminus, the 377-residue chain is Alanine racemase (377 aa).

Lysine 37 acts as the Proton acceptor; specific for D-alanine in catalysis. Lysine 37 bears the N6-(pyridoxal phosphate)lysine mark. Arginine 135 contacts substrate. The active-site Proton acceptor; specific for L-alanine is the tyrosine 271. Methionine 319 contacts substrate.

This sequence belongs to the alanine racemase family. Pyridoxal 5'-phosphate serves as cofactor.

The catalysed reaction is L-alanine = D-alanine. It participates in amino-acid biosynthesis; D-alanine biosynthesis; D-alanine from L-alanine: step 1/1. Functionally, catalyzes the interconversion of L-alanine and D-alanine. May also act on other amino acids. The protein is Alanine racemase (alr) of Helicobacter pylori (strain P12).